A 202-amino-acid chain; its full sequence is Recoverin (202 aa).

Gly-2 carries the N-myristoyl glycine lipid modification. 4 EF-hand domains span residues 24-59 (TEEELSSWYQSFLKECPSGRITRQEFQTIYSKFFPE), 61-96 (DPKAYAQHVFRSFDANSDGTLDFKEYVIALHMTSAG), 97-132 (KTNQKLEWAFSLYDVDGNGTISKNEVLEIVTAIFKM), and 147-182 (TPEKRAEKIWGFFGKKDDDKLTEKEFIEGTLANKEI). The residue at position 39 (Cys-39) is a Cysteine sulfenic acid (-SOH). 10 residues coordinate Ca(2+): Asp-74, Asn-76, Asp-78, Thr-80, Glu-85, Asp-110, Asp-112, Asn-114, Thr-116, and Glu-121. The segment at 189–192 (EPQK) is interaction with GRK1. Residues 191–202 (QKVKEKLKEKKL) form a modulates EF-hand 3 domain calcium binding affinity region.

The protein belongs to the recoverin family. Homodimer; disulfide-linked. Homodimerization is caused by prolonged intense illumination. May form a complex composed of RHO, GRK1 and RCVRN in a Ca(2+)-dependent manner; RCVRN prevents the interaction between GRK1 and RHO. Interacts (via C-terminus) with GRK1 (via N-terminus); the interaction is Ca(2+)-dependent. The N-terminal glycine is linked to one of four different types of acyl groups. The most abundant is myristoleate (14:1), but 14:0, 14:2, and 12:0 acyl residues are also present. The Ca(2+) induced exposure of the myristoyl group, known as the calcium-myristoyl switch, promotes RCVRN binding to the photoreceptor cell membranes only when intracellular Ca(2+) concentration is high. In terms of processing, oxidation on Cys-39 occurs in response to prolonged intense illumination and results in the formation of disulfide homodimers, and to a lesser extent disulfide-linked heterodimers. As to expression, expressed in the retina (at protein level). Expressed in the pineal gland (at protein level).

The protein localises to the photoreceptor inner segment. Its subcellular location is the cell projection. The protein resides in the cilium. It localises to the photoreceptor outer segment. It is found in the photoreceptor outer segment membrane. The protein localises to the perikaryon. In terms of biological role, acts as a calcium sensor and regulates phototransduction of cone and rod photoreceptor cells. Modulates light sensitivity of cone photoreceptor in dark and dim conditions. In response to high Ca(2+) levels induced by low light levels, prolongs RHO/rhodopsin activation in rod photoreceptor cells by binding to and inhibiting GRK1-mediated phosphorylation of RHO/rhodopsin. Plays a role in scotopic vision/enhances vision in dim light by enhancing signal transfer between rod photoreceptors and rod bipolar cells. Improves rod photoreceptor sensitivity in dim light and mediates response of rod photoreceptors to facilitate detection of change and motion in bright light. The chain is Recoverin (RCVRN) from Bos taurus (Bovine).